Consider the following 406-residue polypeptide: Putative F-box protein At5g38270 (406 aa).

Positions 20–67 (HDWSKLCPDILRSILESLSSTDFHRAKTVCSDWYSNWKTCVKPLCPWR) constitute an F-box domain.

This Arabidopsis thaliana (Mouse-ear cress) protein is Putative F-box protein At5g38270.